The primary structure comprises 633 residues: 1-deoxy-D-xylulose-5-phosphate synthase (633 aa).

Residues 1–12 show a composition bias toward polar residues; sequence MSEPTANLQPAS. A disordered region spans residues 1 to 21; it reads MSEPTANLQPASRTPLLDRVN. Residues H86 and 127–129 each bind thiamine diphosphate; that span reads GHA. Mg(2+) is bound at residue D158. Residues 159–160, N187, and E377 contribute to the thiamine diphosphate site; that span reads GS. N187 contacts Mg(2+).

Belongs to the transketolase family. DXPS subfamily. As to quaternary structure, homodimer. Requires Mg(2+) as cofactor. The cofactor is thiamine diphosphate.

The enzyme catalyses D-glyceraldehyde 3-phosphate + pyruvate + H(+) = 1-deoxy-D-xylulose 5-phosphate + CO2. Its pathway is metabolic intermediate biosynthesis; 1-deoxy-D-xylulose 5-phosphate biosynthesis; 1-deoxy-D-xylulose 5-phosphate from D-glyceraldehyde 3-phosphate and pyruvate: step 1/1. In terms of biological role, catalyzes the acyloin condensation reaction between C atoms 2 and 3 of pyruvate and glyceraldehyde 3-phosphate to yield 1-deoxy-D-xylulose-5-phosphate (DXP). This is 1-deoxy-D-xylulose-5-phosphate synthase from Deinococcus geothermalis (strain DSM 11300 / CIP 105573 / AG-3a).